Reading from the N-terminus, the 466-residue chain is Transcription factor SOX-10 (466 aa).

The tract at residues 1-67 is disordered; sequence MAEEQDLSEV…QQDGEADDDK (67 aa). A compositionally biased stretch (low complexity) spans 23-32; it reads LSPGSAPSLG. Phosphoserine is present on Ser-24. Positions 62–102 are dimerization (DIM); sequence EADDDKFPVCIREAVSQVLSGYDWTLVPMPVRVNGASKSKP. Positions 104-172 form a DNA-binding region, HMG box; that stretch reads VKRPMNAFMV…QHKKDHPDYK (69 aa). Residues 134–145 carry the Nuclear export signal motif; it reads LSKTLGKLWRLL. 2 stretches are compositionally biased toward basic and acidic residues: residues 160–173 and 254–271; these read LRMQHKKDHPDYKY and ADPKRDGRSMGEGGKPHI. Disordered regions lie at residues 160–199, 212–274, 354–375, and 433–466; these read LRMQHKKDHPDYKYQPRRRKNGKAAQGEAECPGGEAEQGG, LDHR…IDFG, AQVKTETAGPQGPPHYTDQPST, and RPLYTAISDPSPSGPQSHSPTHWEQPVYTTLSRP. The tract at residues 228-310 is transactivation domain (TAM); that stretch reads PEHPSGQSHG…LPPNGHPGHV (83 aa). Residues 353–466 form a transactivation domain (TAC) region; the sequence is KAQVKTETAG…QPVYTTLSRP (114 aa). A compositionally biased stretch (polar residues) spans 440–466; the sequence is SDPSPSGPQSHSPTHWEQPVYTTLSRP.

As to quaternary structure, monomer. Interacts with ARMCX3 at the mitochondrial outer membrane surface. Interacts with PAX3. Expressed in fetal brain and in adult brain, heart, small intestine and colon.

It is found in the cytoplasm. The protein localises to the nucleus. Its subcellular location is the mitochondrion outer membrane. In terms of biological role, transcription factor that plays a central role in developing and mature glia. Specifically activates expression of myelin genes, during oligodendrocyte (OL) maturation, such as DUSP15 and MYRF, thereby playing a central role in oligodendrocyte maturation and CNS myelination. Once induced, MYRF cooperates with SOX10 to implement the myelination program. Transcriptional activator of MITF, acting synergistically with PAX3. Transcriptional activator of MBP, via binding to the gene promoter. In Homo sapiens (Human), this protein is Transcription factor SOX-10 (SOX10).